The primary structure comprises 964 residues: Insulin receptor substrate 1 (964 aa).

A PH domain is found at 8-109 (GMALSGNLKK…WLDKLLVLQR (102 aa)). Residues 122–236 (YDQVWQVVIQ…SAMSAKTESN (115 aa)) enclose the IRS-type PTB domain. A disordered region spans residues 249–268 (LSHEPMRKRSSSANEASKPI). A phosphoserine mark is found at Ser286, Ser287, and Ser342. Tyr410 is subject to Phosphotyrosine; by INSR. The YXXM motif 1 motif lies at 410–413 (YIPM). The tract at residues 527-560 (ASNRSQSSIGKEGSSYGSSANRQKKSTSAPLLSL) is disordered. Residues 528–560 (SNRSQSSIGKEGSSYGSSANRQKKSTSAPLLSL) are compositionally biased toward polar residues. Phosphoserine is present on Ser554. The short motif at 640–643 (YLEM) is the YXXM motif 2 element. Residues 698–712 (EKWREQPSRSEEKKS) show a composition bias toward basic and acidic residues. The disordered stretch occupies residues 698 to 735 (EKWREQPSRSEEKKSNSPLNDNPFSLKPTNVESKSKSH). Polar residues predominate over residues 713 to 729 (NSPLNDNPFSLKPTNVE). Residue Tyr907 is modified to Phosphotyrosine; by INSR. Residues 921 to 964 (AKYLKRGSRESPPVSACPEDGNTYARIDFDQSDSSSSSSNIFNT) are disordered. A phosphoserine mark is found at Ser928 and Ser931. The residue at position 944 (Tyr944) is a Phosphotyrosine; by INSR. A compositionally biased stretch (low complexity) spans 952-964 (SDSSSSSSNIFNT).

In terms of assembly, bindings to phosphatidylinositol 3-kinase and SHP2.

Functionally, activates phosphatidylinositol 3-kinase when bound to the regulatory p85 subunit. May mediate the control of various cellular processes by insulin-like peptides. When phosphorylated by the insulin receptor binds specifically to various cellular proteins containing SH2 domains. Involved in control of cell proliferation, cell size, and body and organ growth throughout development. Also has a role in a signaling pathway controlling the physiological response required to endure periods of low nutrient conditions. Insulin/insulin-like growth factor (IGF) signaling pathway has a role in regulating aging and is necessary in the ovary for vitellogenic maturation. This is Insulin receptor substrate 1 from Drosophila sechellia (Fruit fly).